The sequence spans 998 residues: Ephrin type-B receptor 3 (998 aa).

The N-terminal stretch at 1-33 (MARARPPPPPSPPPGLLPLLPPLLLLPLLLLPA) is a signal peptide. Residues 34-559 (GCRALEETLM…AQQLQEQLPL (526 aa)) lie on the Extracellular side of the membrane. Residues 39-217 (EETLMDTKWV…FYKKCASTTA (179 aa)) enclose the Eph LBD domain. Cys81 and Cys199 are joined by a disulfide. Fibronectin type-III domains lie at 339–451 (VPSP…TNQA) and 452–545 (APSE…TTSE). N-linked (GlcNAc...) asparagine glycans are attached at residues Asn351 and Asn445. A helical membrane pass occupies residues 560-580 (IVGSATAGLVFVVAVVVIAIV). At 581–998 (CLRKQRHGSD…QMNQTLPVQV (418 aa)) the chain is on the cytoplasmic side. Residue Tyr614 is modified to Phosphotyrosine; by autocatalysis. Positions 633–896 (VKIEEVIGAG…QIVNTLDKLI (264 aa)) constitute a Protein kinase domain. ATP contacts are provided by residues 639–647 (IGAGEFGEV) and Lys665. The active-site Proton acceptor is Asp758. The 65-residue stretch at 925–989 (TTFTTVGDWL…LSSIQDMRLQ (65 aa)) folds into the SAM domain. A PDZ-binding motif is present at residues 996–998 (VQV).

The protein belongs to the protein kinase superfamily. Tyr protein kinase family. Ephrin receptor subfamily. As to quaternary structure, heterotetramer upon binding of the ligand. The heterotetramer is composed of an ephrin dimer and a receptor dimer. Oligomerization is probably required to induce biological responses. In terms of processing, phosphorylated. Autophosphorylates upon ligand-binding. Autophosphorylation on Tyr-614 is required for interaction with SH2 domain-containing proteins. Ubiquitinated by RNF186, mainly through 'Lys-48' and 'Lys-63'-linked polyubiquitin chains. In terms of tissue distribution, ubiquitous.

It localises to the cell membrane. It is found in the cell projection. The protein resides in the dendrite. It carries out the reaction L-tyrosyl-[protein] + ATP = O-phospho-L-tyrosyl-[protein] + ADP + H(+). Functionally, receptor tyrosine kinase which binds promiscuously transmembrane ephrin-B family ligands residing on adjacent cells, leading to contact-dependent bidirectional signaling into neighboring cells. The signaling pathway downstream of the receptor is referred to as forward signaling while the signaling pathway downstream of the ephrin ligand is referred to as reverse signaling. Generally has an overlapping and redundant function with EPHB2. Like EPHB2, functions in axon guidance during development regulating for instance the neurons forming the corpus callosum and the anterior commissure, 2 major interhemispheric connections between the temporal lobes of the cerebral cortex. In addition to its role in axon guidance also plays an important redundant role with other ephrin-B receptors in development and maturation of dendritic spines and the formation of excitatory synapses. Controls other aspects of development through regulation of cell migration and positioning. This includes angiogenesis, palate development and thymic epithelium development for instance. Forward and reverse signaling through the EFNB2/EPHB3 complex also regulate migration and adhesion of cells that tubularize the urethra and septate the cloaca. Finally, plays an important role in intestinal epithelium differentiation segregating progenitor from differentiated cells in the crypt. In Homo sapiens (Human), this protein is Ephrin type-B receptor 3 (EPHB3).